Consider the following 368-residue polypeptide: Phosphate acyltransferase (368 aa).

The segment at Glu334 to Ala368 is disordered.

This sequence belongs to the PlsX family. In terms of assembly, homodimer. Probably interacts with PlsY.

It localises to the cytoplasm. The catalysed reaction is a fatty acyl-[ACP] + phosphate = an acyl phosphate + holo-[ACP]. It participates in lipid metabolism; phospholipid metabolism. Its function is as follows. Catalyzes the reversible formation of acyl-phosphate (acyl-PO(4)) from acyl-[acyl-carrier-protein] (acyl-ACP). This enzyme utilizes acyl-ACP as fatty acyl donor, but not acyl-CoA. This chain is Phosphate acyltransferase, found in Paraburkholderia xenovorans (strain LB400).